We begin with the raw amino-acid sequence, 93 residues long: C-C motif chemokine 14 (93 aa).

An N-terminal signal peptide occupies residues 1 to 19 (MKISVAAIPFFLLITIALG). O-linked (GalNAc...) serine; partial glycosylation is present at serine 26. 2 cysteine pairs are disulfide-bonded: cysteine 35/cysteine 59 and cysteine 36/cysteine 75.

The protein belongs to the intercrine beta (chemokine CC) family. The N-terminal processed forms HCC-1(3-74), HCC-1(4-74) and HCC-1(9-74) are produced in small amounts by proteolytic cleavage after secretion in blood. In terms of processing, HCC-1(1-74), but not HCC-1(3-74) and HCC-1(4-74), is partially O-glycosylated; the O-linked glycan consists of one Gal-GalNAc disaccharide, further modified by two N-acetylneuraminic acids. Expressed constitutively in several normal tissues: spleen, liver, skeletal and heart muscle, gut, and bone marrow, present at high concentrations (1-80 nM) in plasma.

The protein resides in the secreted. Its function is as follows. Has weak activities on human monocytes and acts via receptors that also recognize MIP-1 alpha. It induces intracellular Ca(2+) changes and enzyme release, but no chemotaxis, at concentrations of 100-1,000 nM, and is inactive on T-lymphocytes, neutrophils, and eosinophil leukocytes. Enhances the proliferation of CD34 myeloid progenitor cells. The processed form HCC-1(9-74) is a chemotactic factor that attracts monocytes, eosinophils, and T-cells and is a ligand for CCR1, CCR3 and CCR5. This chain is C-C motif chemokine 14 (CCL14), found in Homo sapiens (Human).